Here is a 207-residue protein sequence, read N- to C-terminus: Guanylate kinase (207 aa).

Residues 6-185 (GLLIVLSGPS…AKNRIQCIVE (180 aa)) form the Guanylate kinase-like domain. Residue 13 to 20 (GPSGVGKG) participates in ATP binding.

It belongs to the guanylate kinase family.

Its subcellular location is the cytoplasm. The catalysed reaction is GMP + ATP = GDP + ADP. Functionally, essential for recycling GMP and indirectly, cGMP. In Staphylococcus aureus (strain bovine RF122 / ET3-1), this protein is Guanylate kinase.